The primary structure comprises 399 residues: Formate-dependent phosphoribosylglycinamide formyltransferase (399 aa).

Residues 21–22 (EL) and Glu81 each bind N(1)-(5-phospho-beta-D-ribosyl)glycinamide. ATP-binding positions include Arg114, Lys156, 161-166 (SSGKGQ), 196-199 (EGFI), and Glu204. Residues 119-314 (RLAAEELGLP…EFELHARAIL (196 aa)) enclose the ATP-grasp domain. Mg(2+) is bound by residues Glu273 and Glu285. N(1)-(5-phospho-beta-D-ribosyl)glycinamide-binding positions include Asp292, Lys361, and 368–369 (RR). Positions 370–399 (MGVAVANGESTDQARERAKLAASKVRPTRT) are disordered.

This sequence belongs to the PurK/PurT family. Homodimer.

The catalysed reaction is N(1)-(5-phospho-beta-D-ribosyl)glycinamide + formate + ATP = N(2)-formyl-N(1)-(5-phospho-beta-D-ribosyl)glycinamide + ADP + phosphate + H(+). The protein operates within purine metabolism; IMP biosynthesis via de novo pathway; N(2)-formyl-N(1)-(5-phospho-D-ribosyl)glycinamide from N(1)-(5-phospho-D-ribosyl)glycinamide (formate route): step 1/1. In terms of biological role, involved in the de novo purine biosynthesis. Catalyzes the transfer of formate to 5-phospho-ribosyl-glycinamide (GAR), producing 5-phospho-ribosyl-N-formylglycinamide (FGAR). Formate is provided by PurU via hydrolysis of 10-formyl-tetrahydrofolate. In Dechloromonas aromatica (strain RCB), this protein is Formate-dependent phosphoribosylglycinamide formyltransferase.